Here is a 438-residue protein sequence, read N- to C-terminus: Putative galacturan 1,4-alpha-galacturonidase A (438 aa).

Positions 1 to 21 (MRMPSAISIGVFAGLSLAASA) are cleaved as a signal peptide. N-linked (GlcNAc...) asparagine glycosylation is found at N28, N102, N111, and N197. PbH1 repeat units lie at residues 186 to 222 (SSHI…DTYR) and 223 to 244 (SDHI…AFKG). The active-site Proton donor is D237. 7 N-linked (GlcNAc...) asparagine glycosylation sites follow: N245, N253, N279, N325, N353, N372, and N388. PbH1 repeat units lie at residues 246–266 (STNI…AFGS), 277–303 (VENV…YFKS), and 323–344 (VRNV…YIDT). An intrachain disulfide couples C397 to C403. Residue N418 is glycosylated (N-linked (GlcNAc...) asparagine).

It belongs to the glycosyl hydrolase 28 family.

The protein localises to the secreted. It carries out the reaction [(1-&gt;4)-alpha-D-galacturonosyl](n) + H2O = alpha-D-galacturonate + [(1-&gt;4)-alpha-D-galacturonosyl](n-1). In terms of biological role, specific in hydrolyzing the terminal glycosidic bond of polygalacturonic acid and oligogalacturonates. In Aspergillus niger, this protein is Putative galacturan 1,4-alpha-galacturonidase A (rgxA).